Consider the following 403-residue polypeptide: MEKKINVFSEIGTLKTVLVHRPGDEIENLTPELLERLLFDDVPFKDVAVKEHDAFTKIMRDNGVEVLYIEKLAAETLDQHPDLREKFIDQFISEANIEDKYKEKYRDFISSLDNYRMIKKMIAGTKKLELGIDEGYKAYPFIADPLPNVLFQRDPFSSVGFGITMNRMWSVTRNRETIFPDLVFKHHNRFANQVPYYYERDWKEETIEGGDILVLNKETLIIGVTQRTTLKAIEKFSERLFNDPESSYSKVIALDLPKSRAFMHLDTVFTNIDYDKFIAHPLIFDCIDEFKIYEVSKQGTKEVKKTLIELLSDAAGREVQIIRCGGNDVVGASREQWNDGTNVVALRPGKVIAYERNWITIDLLRKAGVEVLTIASSELSRGRGGPRCMTMPLWREDLQEIKR.

C388 functions as the Amidino-cysteine intermediate in the catalytic mechanism.

The protein belongs to the arginine deiminase family.

The protein resides in the cytoplasm. It carries out the reaction L-arginine + H2O = L-citrulline + NH4(+). It participates in amino-acid degradation; L-arginine degradation via ADI pathway; carbamoyl phosphate from L-arginine: step 1/2. In Mycoplasma capricolum subsp. capricolum (strain California kid / ATCC 27343 / NCTC 10154), this protein is Arginine deiminase.